We begin with the raw amino-acid sequence, 296 residues long: Urease accessory protein UreD (296 aa).

This sequence belongs to the UreD family. UreD, UreF and UreG form a complex that acts as a GTP-hydrolysis-dependent molecular chaperone, activating the urease apoprotein by helping to assemble the nickel containing metallocenter of UreC. The UreE protein probably delivers the nickel.

The protein resides in the cytoplasm. Functionally, required for maturation of urease via the functional incorporation of the urease nickel metallocenter. The sequence is that of Urease accessory protein UreD from Janthinobacterium sp. (strain Marseille) (Minibacterium massiliensis).